The sequence spans 425 residues: Apolipoprotein N-acyltransferase (425 aa).

Helical transmembrane passes span 12 to 32 (LLAC…AYAI), 34 to 54 (NPYI…LAFL), 60 to 80 (SAFA…ALSF), 88 to 108 (LLPL…YLLL), 120 to 140 (FLGS…DSFF), and 142 to 162 (YSVF…CIFL). Positions 201 to 425 (VSTKTPQDLK…LGDILFRKRS (225 aa)) constitute a CN hydrolase domain. The Proton acceptor role is filled by Glu-242. Lys-296 is an active-site residue. Cys-349 acts as the Nucleophile in catalysis.

This sequence belongs to the CN hydrolase family. Apolipoprotein N-acyltransferase subfamily.

It localises to the cell inner membrane. It catalyses the reaction N-terminal S-1,2-diacyl-sn-glyceryl-L-cysteinyl-[lipoprotein] + a glycerophospholipid = N-acyl-S-1,2-diacyl-sn-glyceryl-L-cysteinyl-[lipoprotein] + a 2-acyl-sn-glycero-3-phospholipid + H(+). It participates in protein modification; lipoprotein biosynthesis (N-acyl transfer). Its function is as follows. Catalyzes the phospholipid dependent N-acylation of the N-terminal cysteine of apolipoprotein, the last step in lipoprotein maturation. This chain is Apolipoprotein N-acyltransferase, found in Helicobacter pylori (strain ATCC 700392 / 26695) (Campylobacter pylori).